The sequence spans 103 residues: CLAVATA3/ESR (CLE)-related protein 16 (103 aa).

Residues 1–21 form the signal peptide; that stretch reads MEACSRKRRRRRAYTTSTTGY. The disordered stretch occupies residues 71 to 103; it reads VSFTGQRREEENRDEVYKDDKRLVHTGPNPLHN. The span at 76–93 shows a compositional bias: basic and acidic residues; the sequence is QRREEENRDEVYKDDKRL. The residue at position 98 (P98) is a Hydroxyproline. A glycan (O-linked (Ara...) hydroxyproline) is linked at P98.

It belongs to the CLV3/ESR signal peptide family. Post-translationally, the O-glycosylation (arabinosylation) of the hydroxyproline Pro-98 enhances binding affinity of the CLE16p peptide for its receptor. As to expression, expressed in roots, stems, apex, seedlings, leaves, flowers and siliques.

It is found in the secreted. Its subcellular location is the extracellular space. In terms of biological role, extracellular signal peptide that regulates cell fate. Represses root apical meristem maintenance. Regulates the transition of protophloem cells from proliferation to differentiation, thus impinging on postembryonic growth capacity of the root meristem; this signaling pathway requires CRN and CLV2. The sequence is that of CLAVATA3/ESR (CLE)-related protein 16 from Arabidopsis thaliana (Mouse-ear cress).